We begin with the raw amino-acid sequence, 57 residues long: uncharacterized protein (57 aa).

A helical transmembrane segment spans residues 21–37 (GTYTLVVAFVLAFLVYS).

The protein resides in the host membrane. This is an uncharacterized protein from Human herpesvirus 6B (strain Z29) (HHV-6 variant B).